Consider the following 200-residue polypeptide: Recombination protein RecR (200 aa).

The C4-type zinc-finger motif lies at 58 to 73 (CSLCCNLTDEDPCSIC). Positions 81–176 (NLLCVVEEPR…KVTRIAHGIP (96 aa)) constitute a Toprim domain.

This sequence belongs to the RecR family.

May play a role in DNA repair. It seems to be involved in an RecBC-independent recombinational process of DNA repair. It may act with RecF and RecO. The sequence is that of Recombination protein RecR from Desulforamulus reducens (strain ATCC BAA-1160 / DSM 100696 / MI-1) (Desulfotomaculum reducens).